A 507-amino-acid polypeptide reads, in one-letter code: ATP synthase subunit alpha, chloroplastic (507 aa).

ATP is bound at residue 170–177 (GDRQTGKT).

It belongs to the ATPase alpha/beta chains family. As to quaternary structure, F-type ATPases have 2 components, CF(1) - the catalytic core - and CF(0) - the membrane proton channel. CF(1) has five subunits: alpha(3), beta(3), gamma(1), delta(1), epsilon(1). CF(0) has four main subunits: a, b, b' and c.

The protein resides in the plastid. The protein localises to the chloroplast thylakoid membrane. It carries out the reaction ATP + H2O + 4 H(+)(in) = ADP + phosphate + 5 H(+)(out). Functionally, produces ATP from ADP in the presence of a proton gradient across the membrane. The alpha chain is a regulatory subunit. The chain is ATP synthase subunit alpha, chloroplastic from Ranunculus macranthus (Large buttercup).